The chain runs to 160 residues: Nitrate reductase [NADH] (160 aa).

An FAD-binding site is contributed by Thr37.

It belongs to the nitrate reductase family. As to quaternary structure, homodimer. It depends on FAD as a cofactor. Requires heme as cofactor. Mo-molybdopterin serves as cofactor.

The enzyme catalyses nitrite + NAD(+) + H2O = nitrate + NADH + H(+). Its function is as follows. Nitrate reductase is a key enzyme involved in the first step of nitrate assimilation in plants, fungi and bacteria. This chain is Nitrate reductase [NADH] (NIA), found in Lotus tetragonolobus (Winged pea).